Consider the following 1330-residue polypeptide: Fanconi anemia group I protein homolog (1330 aa).

Lys522 participates in a covalent cross-link: Glycyl lysine isopeptide (Lys-Gly) (interchain with G-Cter in ubiquitin). Residue Ser555 is modified to Phosphoserine. Thr558 is subject to Phosphothreonine. Ser729 bears the Phosphoserine mark. A Phosphothreonine modification is found at Thr948. Ser1122 is modified (phosphoserine). The segment at 1299-1330 (EDEEDENEEGTASAHTQQDREPAKKRRKKCLS) is disordered. Over residues 1321-1330 (AKKRRKKCLS) the composition is skewed to basic residues.

This sequence belongs to the Fanconi anemia group I protein family. As to quaternary structure, homodimer. Part of a FANCI-FANCD2 heterodimeric complex that binds and scans dsDNA for DNA damage. Interacts with FANCL. Interacts with MTMR15/FAN1. Interacts with POLN. Interacts with UBL5; the interaction promotes FANCI homodimerization. In terms of processing, monoubiquitinated by FANCL on Lys-522 during S phase and upon genotoxic stress. Deubiquitinated by USP1 as cells enter G2/M, or once DNA repair is completed. Monoubiquitination requires the FANCA-FANCB-FANCC-FANCE-FANCF-FANCG-FANCM complex. Ubiquitination is required for binding to chromatin, DNA repair, and normal cell cycle progression. Monoubiquitination is stimulated by DNA-binding. Phosphorylated in response to DNA damage by ATM and/or ATR. Phosphorylation of FANCI promotes ubiquitination of FANCD2, which prevents DNA release from the FANCI-FANCD2 complex.

It is found in the nucleus. The protein resides in the cytoplasm. Plays an essential role in the repair of DNA double-strand breaks by homologous recombination and in the repair of interstrand DNA cross-links (ICLs) by promoting FANCD2 monoubiquitination by FANCL and participating in recruitment to DNA repair sites. The FANCI-FANCD2 complex binds and scans double-stranded DNA (dsDNA) for DNA damage; this complex stalls at DNA junctions between double-stranded DNA and single-stranded DNA. Participates in S phase and G2 phase checkpoint activation upon DNA damage. This chain is Fanconi anemia group I protein homolog (Fanci), found in Mus musculus (Mouse).